The primary structure comprises 431 residues: uncharacterized protein (431 aa).

4Fe-4S ferredoxin-type domains follow at residues 336 to 367 (VRPV…NGLD) and 362 to 391 (IDNG…MDTG).

This is an uncharacterized protein from Methanothermobacter thermautotrophicus (strain ATCC 29096 / DSM 1053 / JCM 10044 / NBRC 100330 / Delta H) (Methanobacterium thermoautotrophicum).